Here is a 253-residue protein sequence, read N- to C-terminus: Uridylate kinase (253 aa).

Residue 9–12 (KLSG) participates in ATP binding. Residue G51 participates in UMP binding. ATP-binding residues include G52 and R56. UMP-binding positions include D72 and 133–140 (SGNPFFTT). ATP contacts are provided by T160, Y166, and D169.

This sequence belongs to the UMP kinase family. As to quaternary structure, homohexamer.

Its subcellular location is the cytoplasm. The catalysed reaction is UMP + ATP = UDP + ADP. It participates in pyrimidine metabolism; CTP biosynthesis via de novo pathway; UDP from UMP (UMPK route): step 1/1. Inhibited by UTP. Its function is as follows. Catalyzes the reversible phosphorylation of UMP to UDP. The protein is Uridylate kinase of Synechococcus sp. (strain JA-2-3B'a(2-13)) (Cyanobacteria bacterium Yellowstone B-Prime).